The chain runs to 246 residues: Ureidoacrylate amidohydrolase RutB (246 aa).

The segment at 1–27 (MSAVTAAGYQAPQERSQSVTLPARPEP) is disordered. Catalysis depends on aspartate 41, which acts as the Proton acceptor. Residue lysine 150 is part of the active site. Cysteine 183 (nucleophile) is an active-site residue.

This sequence belongs to the isochorismatase family. RutB subfamily.

The enzyme catalyses (Z)-3-ureidoacrylate + H2O + H(+) = (Z)-3-aminoacrylate + NH4(+) + CO2. It catalyses the reaction (Z)-3-ureidoacrylate + H2O = (Z)-3-aminoacrylate + carbamate + H(+). It carries out the reaction (Z)-2-methylureidoacrylate + H2O + H(+) = (Z)-2-methylaminoacrylate + NH4(+) + CO2. In terms of biological role, hydrolyzes ureidoacrylate to form aminoacrylate and carbamate. The carbamate hydrolyzes spontaneously, thereby releasing one of the nitrogen atoms of the pyrimidine ring as ammonia and one of its carbon atoms as CO2. This chain is Ureidoacrylate amidohydrolase RutB, found in Rhizobium rhizogenes (strain K84 / ATCC BAA-868) (Agrobacterium radiobacter).